We begin with the raw amino-acid sequence, 643 residues long: 1-deoxy-D-xylulose-5-phosphate synthase (643 aa).

Thiamine diphosphate contacts are provided by residues His78 and 119–121 (AHS). Mg(2+) is bound at residue Asp150. Thiamine diphosphate is bound by residues 151-152 (GS), Asn179, Tyr288, and Glu370. Residue Asn179 coordinates Mg(2+).

Belongs to the transketolase family. DXPS subfamily. In terms of assembly, homodimer. It depends on Mg(2+) as a cofactor. Requires thiamine diphosphate as cofactor.

It catalyses the reaction D-glyceraldehyde 3-phosphate + pyruvate + H(+) = 1-deoxy-D-xylulose 5-phosphate + CO2. It participates in metabolic intermediate biosynthesis; 1-deoxy-D-xylulose 5-phosphate biosynthesis; 1-deoxy-D-xylulose 5-phosphate from D-glyceraldehyde 3-phosphate and pyruvate: step 1/1. Catalyzes the acyloin condensation reaction between C atoms 2 and 3 of pyruvate and glyceraldehyde 3-phosphate to yield 1-deoxy-D-xylulose-5-phosphate (DXP). In Brucella canis (strain ATCC 23365 / NCTC 10854 / RM-666), this protein is 1-deoxy-D-xylulose-5-phosphate synthase.